Consider the following 103-residue polypeptide: NAD(P)H-quinone oxidoreductase subunit 4L (103 aa).

A run of 3 helical transmembrane segments spans residues 5–25 (LQYCLILAAALFCIGIYGLIT), 32–52 (VLMSIELLLNAVNLNLMGFSN), and 66–86 (IFVITIAAAEAAVGLAIVLAI).

The protein belongs to the complex I subunit 4L family. NDH-1 can be composed of about 15 different subunits; different subcomplexes with different compositions have been identified which probably have different functions.

Its subcellular location is the cellular thylakoid membrane. It catalyses the reaction a plastoquinone + NADH + (n+1) H(+)(in) = a plastoquinol + NAD(+) + n H(+)(out). It carries out the reaction a plastoquinone + NADPH + (n+1) H(+)(in) = a plastoquinol + NADP(+) + n H(+)(out). In terms of biological role, NDH-1 shuttles electrons from an unknown electron donor, via FMN and iron-sulfur (Fe-S) centers, to quinones in the respiratory and/or the photosynthetic chain. The immediate electron acceptor for the enzyme in this species is believed to be plastoquinone. Couples the redox reaction to proton translocation, and thus conserves the redox energy in a proton gradient. Cyanobacterial NDH-1 also plays a role in inorganic carbon-concentration. This is NAD(P)H-quinone oxidoreductase subunit 4L from Synechocystis sp. (strain ATCC 27184 / PCC 6803 / Kazusa).